Reading from the N-terminus, the 305-residue chain is Cell division control protein 2 homolog C (305 aa).

The Protein kinase domain occupies 4 to 297 (YEKLEKVGEG…AKAALDHPYF (294 aa)). Residues 10 to 18 (VGEGTYGKV) and lysine 33 each bind ATP. Threonine 14 bears the Phosphothreonine mark. Tyrosine 15 bears the Phosphotyrosine mark. Aspartate 138 serves as the catalytic Proton acceptor. Threonine 172 bears the Phosphothreonine; by CAK mark.

The protein belongs to the protein kinase superfamily. CMGC Ser/Thr protein kinase family. CDC2/CDKX subfamily.

It carries out the reaction L-seryl-[protein] + ATP = O-phospho-L-seryl-[protein] + ADP + H(+). The catalysed reaction is L-threonyl-[protein] + ATP = O-phospho-L-threonyl-[protein] + ADP + H(+). The enzyme catalyses [DNA-directed RNA polymerase] + ATP = phospho-[DNA-directed RNA polymerase] + ADP + H(+). Its function is as follows. Plays a key role in the control of the eukaryotic cell cycle. This is Cell division control protein 2 homolog C (CDC2C) from Antirrhinum majus (Garden snapdragon).